A 490-amino-acid polypeptide reads, in one-letter code: Cytochrome P450 2C13, male-specific (490 aa).

Cys-435 is a binding site for heme.

The protein belongs to the cytochrome P450 family. Heme is required as a cofactor. As to expression, liver, and to a lesser extent in prostate, kidney, heart and brain.

The protein localises to the endoplasmic reticulum membrane. Its subcellular location is the microsome membrane. It catalyses the reaction an organic molecule + reduced [NADPH--hemoprotein reductase] + O2 = an alcohol + oxidized [NADPH--hemoprotein reductase] + H2O + H(+). Functionally, cytochromes P450 are a group of heme-thiolate monooxygenases. In liver microsomes, this enzyme is involved in an NADPH-dependent electron transport pathway. It oxidizes a variety of structurally unrelated compounds, including steroids, fatty acids, and xenobiotics. The sequence is that of Cytochrome P450 2C13, male-specific (Cyp2c13) from Rattus norvegicus (Rat).